We begin with the raw amino-acid sequence, 629 residues long: Serine/threonine-protein kinase ICK (629 aa).

One can recognise a Protein kinase domain in the interval 4–284; that stretch reads YTTIKQLGDG…ASQALRYPYF (281 aa). ATP contacts are provided by residues 10–18 and K33; that span reads LGDGTYGSV. The active-site Proton acceptor is D125. The residue at position 157 (T157) is a Phosphothreonine; by CDK7. Residue Y159 is modified to Phosphotyrosine. A Phosphoserine modification is found at S161. Disordered stretches follow at residues 292-376, 455-483, and 581-629; these read IISK…SLHN, SESVGTGTTVSTQASSQRRDTPTLQSSAK, and SSLK…PSRR. A compositionally biased stretch (basic and acidic residues) spans 296–306; that stretch reads DSGKPQREVQD. Pro residues predominate over residues 309–321; that stretch reads GPPPYIKPAPPAQ. Composition is skewed to low complexity over residues 322 to 344 and 457 to 470; these read APAKAYTLISSRPSQASQPPQHS and SVGTGTTVSTQASS.

It belongs to the protein kinase superfamily. CMGC Ser/Thr protein kinase family. CDC2/CDKX subfamily. Mg(2+) is required as a cofactor. In terms of processing, autophosphorylated on serine and threonine residues. Phosphorylation at Thr-157 by CDK7/Cak1p increases kinase activity. As to expression, highly expressed in colon and lung, lower levels present in heart, esophagus, stomach, small intestine and ovary. Localizes to the crypt region of large and small intestine.

Its subcellular location is the cytoplasm. The protein resides in the cytosol. The protein localises to the cell projection. It is found in the cilium. It localises to the nucleus. Its subcellular location is the cytoskeleton. The protein resides in the cilium basal body. It catalyses the reaction L-seryl-[protein] + ATP = O-phospho-L-seryl-[protein] + ADP + H(+). The catalysed reaction is L-threonyl-[protein] + ATP = O-phospho-L-threonyl-[protein] + ADP + H(+). Functionally, has an essential role in ciliogenesis, particularly in neuronal and retinal progenitor cells. Phosphorylates KIF3A. Involved in the control of ciliary length. Regulates the ciliary localization of SHH pathway components as well as the localization of IFT components at ciliary tips. May play a role in cardiac development. Regulates intraflagellar transport (IFT) speed and negatively regulates cilium length in a cAMP and mTORC1 signaling -dependent manner and this regulation requires its kinase activity. This is Serine/threonine-protein kinase ICK (Cilk1) from Mus musculus (Mouse).